A 421-amino-acid polypeptide reads, in one-letter code: Zinc finger protein 584 (421 aa).

The KRAB domain occupies 17–88 (VMFEDVTVYF…SWVDVTPVSR (72 aa)). The segment covering 120–129 (QHQDTHSEGK) has biased composition (basic and acidic residues). A disordered region spans residues 120 to 146 (QHQDTHSEGKPRRHTEHGAAFPPGSSC). C2H2-type zinc fingers lie at residues 159–181 (FKCS…LITH), 214–236 (HVCN…QKVH), 242–264 (FKCS…QRIH), 270–292 (YECS…RKVH), 298–320 (YECT…QRVH), 326–348 (FECK…WKVH), 354–376 (YECS…QQFH), and 382–404 (YECT…KKVH). The segment at 402–421 (KVHTPERRQEDRAHGKVVSC) is disordered. Residues 404–415 (HTPERRQEDRAH) are compositionally biased toward basic and acidic residues.

It belongs to the krueppel C2H2-type zinc-finger protein family.

The protein localises to the nucleus. May be involved in transcriptional regulation. The sequence is that of Zinc finger protein 584 (ZNF584) from Homo sapiens (Human).